Reading from the N-terminus, the 341-residue chain is HTH-type transcriptional repressor PurR (341 aa).

Positions 2-56 constitute an HTH lacI-type domain; it reads ATIKDVAKHAGVSTTTVSHVINKTRFVAEDTKAAVWAAIKALNYSPSAVARSLKV. A DNA-binding region (H-T-H motif) is located at residues 4-23; that stretch reads IKDVAKHAGVSTTTVSHVIN. A DNA-binding region spans residues 48-56; that stretch reads SAVARSLKV. Hypoxanthine is bound by residues Tyr-73, Arg-190, Thr-192, Phe-221, and Asp-275.

Homodimer.

It participates in purine metabolism; purine nucleotide biosynthesis [regulation]. Its function is as follows. Is the main repressor of the genes involved in the de novo synthesis of purine nucleotides, regulating purB, purC, purEK, purF, purHD, purL, purMN and guaBA expression. PurR is allosterically activated to bind its cognate DNA by binding the purine corepressors, hypoxanthine or guanine, thereby effecting transcription repression. The protein is HTH-type transcriptional repressor PurR of Photorhabdus laumondii subsp. laumondii (strain DSM 15139 / CIP 105565 / TT01) (Photorhabdus luminescens subsp. laumondii).